Reading from the N-terminus, the 511-residue chain is Archaeal glutamate synthase [NADPH] (511 aa).

2 consecutive 4Fe-4S ferredoxin-type domains span residues 15 to 44 (FMIERRQDRCIRCRVCERQCGFNVHWYDEE) and 46 to 75 (DMMREDEMKCVGCQRCAVMCPTNALVVKPH). Positions 24, 27, 30, 34, 55, 58, 61, and 65 each coordinate [4Fe-4S] cluster.

This sequence belongs to the glutamate synthase family. It depends on FMN as a cofactor.

The enzyme catalyses 2 L-glutamate + NADP(+) = L-glutamine + 2-oxoglutarate + NADPH + H(+). The sequence is that of Archaeal glutamate synthase [NADPH] from Archaeoglobus fulgidus (strain ATCC 49558 / DSM 4304 / JCM 9628 / NBRC 100126 / VC-16).